Here is a 302-residue protein sequence, read N- to C-terminus: Heat stress transcription factor B-1 (302 aa).

A compositionally biased stretch (low complexity) spans 1 to 15; that stretch reads MAAAEAAAAVGKQQQ. Disordered stretches follow at residues 1-33 and 116-184; these read MAAA…PFLT and GIRR…RKDN. Positions 16 to 28 are enriched in gly residues; it reads KGGGGRGGGGGGP. The segment covering 123–133 has biased composition (polar residues); the sequence is TTPQSSKSCGS. The span at 139–150 shows a compositional bias: pro residues; it reads FPPPLPPLPPEP. The span at 151 to 172 shows a compositional bias: low complexity; sequence SATTSSGNDRSSSSASSPPRAD. Residues 170-202 adopt a coiled-coil conformation; that stretch reads RADITSENEQLRKDNQTLTMELARARRHCEELL. The hydrophobic repeat HR-A/B stretch occupies residues 180-209; it reads LRKDNQTLTMELARARRHCEELLGFLSRFL. Positions 211 to 218 match the Nuclear export signal motif; that stretch reads VRQLDLRL. The Nuclear localization signal signature appears at 263–267; it reads RKRAR.

It belongs to the HSF family. Class B subfamily. Homotrimer. Exhibits temperature-dependent phosphorylation.

The protein resides in the cytoplasm. It is found in the nucleus. In terms of biological role, transcriptional regulator that specifically binds DNA of heat shock promoter elements (HSE). The sequence is that of Heat stress transcription factor B-1 (HSFB1) from Oryza sativa subsp. japonica (Rice).